The chain runs to 432 residues: Glutamyl-tRNA reductase (432 aa).

Residues 55-58 (TCNR), S114, 119-121 (ETQ), and Q125 each bind substrate. The active-site Nucleophile is C56. NADP(+) is bound at residue 194–199 (GAGEMI).

Belongs to the glutamyl-tRNA reductase family. Homodimer.

The catalysed reaction is (S)-4-amino-5-oxopentanoate + tRNA(Glu) + NADP(+) = L-glutamyl-tRNA(Glu) + NADPH + H(+). The protein operates within porphyrin-containing compound metabolism; protoporphyrin-IX biosynthesis; 5-aminolevulinate from L-glutamyl-tRNA(Glu): step 1/2. Functionally, catalyzes the NADPH-dependent reduction of glutamyl-tRNA(Glu) to glutamate 1-semialdehyde (GSA). In Burkholderia lata (strain ATCC 17760 / DSM 23089 / LMG 22485 / NCIMB 9086 / R18194 / 383), this protein is Glutamyl-tRNA reductase.